A 161-amino-acid chain; its full sequence is MAKVQKKPDLSDPKLKAMLKKGMGHNYYGEPAWPNDLLYIFPVVILGSIALCVGLAVLDPAMVGEPADPFATPLEILPEWYLYPVFQILRVVPNKLLGVVLMGSIPLGLMLVPFIENVNKFQNPFRRPVATTVFLFGTLFTLWLGIGATFPIDKSFTLGLF.

Helical transmembrane passes span leucine 37 to valine 57, leucine 96 to glutamate 116, and threonine 132 to isoleucine 152.

It belongs to the cytochrome b family. PetD subfamily. The 4 large subunits of the cytochrome b6-f complex are cytochrome b6, subunit IV (17 kDa polypeptide, PetD), cytochrome f and the Rieske protein, while the 4 small subunits are PetG, PetL, PetM and PetN. The complex functions as a dimer.

Its subcellular location is the cellular thylakoid membrane. Component of the cytochrome b6-f complex, which mediates electron transfer between photosystem II (PSII) and photosystem I (PSI), cyclic electron flow around PSI, and state transitions. This is Cytochrome b6-f complex subunit 4 from Cyanothece sp. (strain PCC 7425 / ATCC 29141).